The following is a 344-amino-acid chain: Beta-1,4-galactosyltransferase 4 (344 aa).

Topologically, residues 1–12 (MGFNLTFHLSYK) are cytoplasmic. Residues 13 to 38 (FRLLLLLTLCLTVVGWATSNYFVGAI) traverse the membrane as a helical; Signal-anchor for type II membrane protein segment. Residues 39 to 344 (QEIPKAKEFM…NITVDFWFGA (306 aa)) lie on the Lumenal side of the membrane. Cys-77 and Cys-118 form a disulfide bridge. UDP-alpha-D-galactose is bound by residues 129–133 (PHRNR), 168–170 (FNR), and 195–196 (VD). Cys-189 and Cys-208 are joined by a disulfide. Mn(2+) is bound at residue Asp-196. Asn-220 is a glycosylation site (N-linked (GlcNAc...) asparagine). UDP-alpha-D-galactose contacts are provided by Tyr-224 and Trp-256. 258-261 (GEDD) is an N-acetyl-D-glucosamine binding site. His-289 is a binding site for Mn(2+). Position 289–291 (289–291 (HTR)) interacts with UDP-alpha-D-galactose. Arg-301 lines the N-acetyl-D-glucosamine pocket. Residue Asn-335 is glycosylated (N-linked (GlcNAc...) asparagine).

It belongs to the glycosyltransferase 7 family. In terms of assembly, interacts with SLC35A2 (isoform 2; UGT1). It depends on Mn(2+) as a cofactor. In terms of processing, N-glycosylated. In terms of tissue distribution, highest expression is observed in placenta, pancreas, kidney and heart. Expressed in corneal epithelial cells.

The protein resides in the golgi apparatus membrane. It is found in the secreted. It catalyses the reaction N-acetyl-D-glucosamine + UDP-alpha-D-galactose = beta-D-galactosyl-(1-&gt;4)-N-acetyl-D-glucosamine + UDP + H(+). The enzyme catalyses a beta-D-GlcNAc-(1-&gt;3)-beta-D-Gal-(1-&gt;4)-beta-D-Glc-(1&lt;-&gt;1)-Cer(d18:1(4E)) + UDP-alpha-D-galactose = a neolactoside nLc4Cer(d18:1(4E)) + UDP + H(+). The catalysed reaction is 3-O-{beta-D-galactosyl-(1-&gt;3)-[6-O-sulfo-N-acetyl-beta-D-glucosaminyl-(1-&gt;6)]-N-acetyl-alpha-D-galactosaminyl}-L-seryl-[protein] + UDP-alpha-D-galactose = 3-O-{beta-D-galactosyl-(1-&gt;3)-[beta-D-galactosyl-(1-&gt;4)-6-O-sulfo-N-acetyl-beta-D-glucosaminyl-(1-&gt;6)]-N-acetyl-alpha-D-galactosaminyl}-L-seryl-[protein] + UDP + H(+). It carries out the reaction 3-O-{beta-D-galactosyl-(1-&gt;3)-[6-O-sulfo-N-acetyl-beta-D-glucosaminyl-(1-&gt;6)]-N-acetyl-alpha-D-galactosaminyl}-L-threonyl-[protein] + UDP-alpha-D-galactose = 3-O-{beta-D-galactosyl-(1-&gt;3)-[beta-D-galactosyl-(1-&gt;4)-6-O-sulfo-N-acetyl-beta-D-glucosaminyl-(1-&gt;6)]-N-acetyl-alpha-D-galactosaminyl}-L-threonyl-[protein] + UDP + H(+). The protein operates within protein modification; protein glycosylation. Its pathway is glycolipid biosynthesis. Its activity is regulated as follows. Up-regulated by LALBA. Functionally, galactose (Gal) transferase involved in the synthesis of terminal N-acetyllactosamine (LacNac) unit present on glycan chains of glycoproteins and glycosphingolipids. Catalyzes the transfer of Gal residue via a beta1-&gt;4 linkage from UDP-Gal to the non-reducing terminal N-acetyl glucosamine 6-O-sulfate (6-O-sulfoGlcNAc) in the linearly growing chain of both N- and O-linked keratan sulfate proteoglycans. Cooperates with B3GNT7 N-acetyl glucosamine transferase and CHST6 and CHST1 sulfotransferases to construct and elongate mono- and disulfated disaccharide units [-&gt;3Galbeta1-&gt;4(6-sulfoGlcNAcbeta)1-&gt;] and [-&gt;3(6-sulfoGalbeta)1-&gt;4(6-sulfoGlcNAcbeta)1-&gt;] within keratan sulfate polymer. Transfers Gal residue via a beta1-&gt;4 linkage to terminal 6-O-sulfoGlcNAc within the LacNac unit of core 2 O-glycans forming 6-sulfo-sialyl-Lewis X (sLex). May contribute to the generation of sLex epitope on mucin-type glycoproteins that serve as ligands for SELL/L-selectin, a major regulator of leukocyte migration. In the biosynthesis pathway of neolacto-series glycosphingolipids, transfers Gal residue via a beta1-&gt;4 linkage to terminal GlcNAc of a lactotriaosylceramide (Lc3Cer) acceptor to form a neolactotetraosylceramide. The sequence is that of Beta-1,4-galactosyltransferase 4 from Homo sapiens (Human).